The chain runs to 466 residues: Probable sensor protein PcoS (466 aa).

Over 1 to 10 (MRFKISLTTR) the chain is Cytoplasmic. A helical membrane pass occupies residues 11–31 (LSLIFSAVMLTVWWLSSFILI). Over 32–171 (STLNDYFDNQ…HTLLMDKLST (140 aa)) the chain is Periplasmic. The helical transmembrane segment at 172 to 192 (WLFWFNIGLVFISVFLGWLTT) threads the bilayer. Positions 193–246 (RIGLKPLREMTSLASSMTVHSLDQRLNPDLAPPEISETMQEFNNMFDRLEGAFR) constitute an HAMP domain. The Cytoplasmic portion of the chain corresponds to 193-466 (RIGLKPLREM…IVFKVRLLMD (274 aa)). Residues 254–466 (DIAHELRTPV…IVFKVRLLMD (213 aa)) enclose the Histidine kinase domain. Residue His-257 is modified to Phosphohistidine; by autocatalysis.

It localises to the cell inner membrane. It carries out the reaction ATP + protein L-histidine = ADP + protein N-phospho-L-histidine.. Probable member of a two-component regulatory system PcoS/PcoR. May activate PcoR by phosphorylation. This Escherichia coli protein is Probable sensor protein PcoS (pcoS).